We begin with the raw amino-acid sequence, 481 residues long: Glutamyl-tRNA(Gln) amidotransferase subunit A (481 aa).

Catalysis depends on charge relay system residues K74 and S149. S173 acts as the Acyl-ester intermediate in catalysis.

The protein belongs to the amidase family. GatA subfamily. Heterotrimer of A, B and C subunits.

The enzyme catalyses L-glutamyl-tRNA(Gln) + L-glutamine + ATP + H2O = L-glutaminyl-tRNA(Gln) + L-glutamate + ADP + phosphate + H(+). Functionally, allows the formation of correctly charged Gln-tRNA(Gln) through the transamidation of misacylated Glu-tRNA(Gln) in organisms which lack glutaminyl-tRNA synthetase. The reaction takes place in the presence of glutamine and ATP through an activated gamma-phospho-Glu-tRNA(Gln). The protein is Glutamyl-tRNA(Gln) amidotransferase subunit A of Francisella tularensis subsp. mediasiatica (strain FSC147).